We begin with the raw amino-acid sequence, 198 residues long: Proteasome subunit beta 1 (198 aa).

Positions 1-6 (MSGPGA) are cleaved as a propeptide — removed in mature form; by autocatalysis. Thr7 acts as the Nucleophile in catalysis.

Belongs to the peptidase T1B family. As to quaternary structure, the 20S proteasome core is composed of 14 alpha and 14 beta subunits that assemble into four stacked heptameric rings, resulting in a barrel-shaped structure. The two inner rings, each composed of seven catalytic beta subunits, are sandwiched by two outer rings, each composed of seven alpha subunits. The catalytic chamber with the active sites is on the inside of the barrel. Has a gated structure, the ends of the cylinder being occluded by the N-termini of the alpha-subunits. Is capped at one or both ends by the proteasome regulatory ATPase, PAN.

It is found in the cytoplasm. The enzyme catalyses Cleavage of peptide bonds with very broad specificity.. With respect to regulation, the formation of the proteasomal ATPase PAN-20S proteasome complex, via the docking of the C-termini of PAN into the intersubunit pockets in the alpha-rings, triggers opening of the gate for substrate entry. Interconversion between the open-gate and close-gate conformations leads to a dynamic regulation of the 20S proteasome proteolysis activity. In terms of biological role, component of the proteasome core, a large protease complex with broad specificity involved in protein degradation. In Ignicoccus hospitalis (strain KIN4/I / DSM 18386 / JCM 14125), this protein is Proteasome subunit beta 1.